A 378-amino-acid polypeptide reads, in one-letter code: Cobalt-precorrin-5B C(1)-methyltransferase (378 aa).

The protein belongs to the CbiD family.

It catalyses the reaction Co-precorrin-5B + S-adenosyl-L-methionine = Co-precorrin-6A + S-adenosyl-L-homocysteine. It participates in cofactor biosynthesis; adenosylcobalamin biosynthesis; cob(II)yrinate a,c-diamide from sirohydrochlorin (anaerobic route): step 6/10. In terms of biological role, catalyzes the methylation of C-1 in cobalt-precorrin-5B to form cobalt-precorrin-6A. This Thermoplasma volcanium (strain ATCC 51530 / DSM 4299 / JCM 9571 / NBRC 15438 / GSS1) protein is Cobalt-precorrin-5B C(1)-methyltransferase.